The primary structure comprises 1069 residues: Receptor-type guanylate cyclase gcy-29 (1069 aa).

An N-terminal signal peptide occupies residues 1–23 (MLPNFWNFQFIFVIFCWIPIVVS). The Extracellular portion of the chain corresponds to 24–458 (DEKIVLKIGS…FREENCDYTQ (435 aa)). 3 N-linked (GlcNAc...) asparagine glycosylation sites follow: asparagine 161, asparagine 240, and asparagine 407. Residues 459-479 (TIVIATAVVCIILTVFLGIWL) traverse the membrane as a helical segment. Topologically, residues 480 to 1069 (RRACETSALD…FKKKNNTFDF (590 aa)) are cytoplasmic. One can recognise a Protein kinase domain in the interval 497-806 (RDDVQILDEE…RVRLATEIAL (310 aa)). ATP contacts are provided by residues 503-511 (LDEEQVKSV) and lysine 527. In terms of domain architecture, Guanylate cyclase spans 876-1006 (TVMFSDIVGF…ETVNIAAVME (131 aa)). Residues aspartate 881, isoleucine 882, and aspartate 925 each coordinate Mg(2+).

The protein belongs to the adenylyl cyclase class-4/guanylyl cyclase family. Expressed bilaterally in ASE and AFD sensory neurons.

Its subcellular location is the cell membrane. The catalysed reaction is GTP = 3',5'-cyclic GMP + diphosphate. Functionally, guanylate cyclase involved in the production of the second messenger cGMP. In Caenorhabditis elegans, this protein is Receptor-type guanylate cyclase gcy-29.